The primary structure comprises 211 residues: Proteasome subunit beta (211 aa).

Residues Met-1 to Gly-9 constitute a propeptide, removed in mature form; by autocatalysis. Catalysis depends on Thr-10, which acts as the Nucleophile.

Belongs to the peptidase T1B family. As to quaternary structure, the 20S proteasome core is composed of 14 alpha and 14 beta subunits that assemble into four stacked heptameric rings, resulting in a barrel-shaped structure. The two inner rings, each composed of seven catalytic beta subunits, are sandwiched by two outer rings, each composed of seven alpha subunits. The catalytic chamber with the active sites is on the inside of the barrel. Has a gated structure, the ends of the cylinder being occluded by the N-termini of the alpha-subunits. Is capped at one or both ends by the proteasome regulatory ATPase, PAN.

The protein resides in the cytoplasm. It catalyses the reaction Cleavage of peptide bonds with very broad specificity.. With respect to regulation, the formation of the proteasomal ATPase PAN-20S proteasome complex, via the docking of the C-termini of PAN into the intersubunit pockets in the alpha-rings, triggers opening of the gate for substrate entry. Interconversion between the open-gate and close-gate conformations leads to a dynamic regulation of the 20S proteasome proteolysis activity. Functionally, component of the proteasome core, a large protease complex with broad specificity involved in protein degradation. The sequence is that of Proteasome subunit beta from Methanosarcina barkeri (strain Fusaro / DSM 804).